The following is a 458-amino-acid chain: tRNA modification GTPase MnmE (458 aa).

Positions 26, 88, and 127 each coordinate (6S)-5-formyl-5,6,7,8-tetrahydrofolate. The TrmE-type G domain maps to 224 to 378 (GLSTAIIGRP…IEDRINQLFF (155 aa)). N234 is a binding site for K(+). Residues 234–239 (NVGKSS), 253–259 (TDIAGTT), and 278–281 (DTAG) contribute to the GTP site. S238 is a binding site for Mg(2+). K(+) contacts are provided by T253, I255, and T258. Residue T259 coordinates Mg(2+). K458 contributes to the (6S)-5-formyl-5,6,7,8-tetrahydrofolate binding site.

It belongs to the TRAFAC class TrmE-Era-EngA-EngB-Septin-like GTPase superfamily. TrmE GTPase family. In terms of assembly, homodimer. Heterotetramer of two MnmE and two MnmG subunits. Requires K(+) as cofactor.

The protein localises to the cytoplasm. Functionally, exhibits a very high intrinsic GTPase hydrolysis rate. Involved in the addition of a carboxymethylaminomethyl (cmnm) group at the wobble position (U34) of certain tRNAs, forming tRNA-cmnm(5)s(2)U34. The chain is tRNA modification GTPase MnmE from Streptococcus pyogenes serotype M18 (strain MGAS8232).